Consider the following 118-residue polypeptide: Protein BEX4 (118 aa).

The segment at 14–50 is disordered; it reads VEKDKKNKKGGKASKQSEEESHHLEEVENKKPGGNVR. The segment covering 28–44 has biased composition (basic and acidic residues); it reads KQSEEESHHLEEVENKK. Residues 30–88 are interaction with SIRT2; that stretch reads SEEESHHLEEVENKKPGGNVRRKVRRLVPNFLWAIPNRHVDHSEGGEEVGRFVGQVMEA. Residues 30–118 are interaction with alpha-tubulin; sequence SEEESHHLEE…DNHYDFCLIP (89 aa). Residue Cys-115 participates in Zn(2+) binding.

Belongs to the BEX family. Interacts with alpha-tubulin. Interacts with SIRT2. Ubiquitinated and degraded by the proteasome.

Its subcellular location is the cytoplasm. It localises to the cytoskeleton. It is found in the spindle pole. The protein localises to the nucleus. Its function is as follows. May play a role in microtubule deacetylation by negatively regulating the SIRT2 deacetylase activity toward alpha-tubulin and thereby participate in the control of cell cycle progression and genomic stability. In absence of reductive stress, acts as a pseudosubstrate for the CRL2(FEM1B) complex: associates with FEM1B via zinc, thereby preventing association between FEM1B and its substrates. This is Protein BEX4 from Rattus norvegicus (Rat).